The following is a 729-amino-acid chain: Rho GTPase-activating protein 28 (729 aa).

A disordered region spans residues Met-1–Glu-78. Residues Leu-37–Asn-49 show a composition bias toward basic residues. Positions Ser-63–Ser-76 are enriched in low complexity. At Ser-70 the chain carries Phosphoserine. A Phosphothreonine modification is found at Thr-164. A disordered region spans residues Phe-180 to Glu-234. Residues Ser-221–Ala-231 are compositionally biased toward polar residues. One can recognise a Rho-GAP domain in the interval Val-384 to Trp-581.

GTPase activator for the Rho-type GTPases by converting them to an inactive GDP-bound state. The chain is Rho GTPase-activating protein 28 (Arhgap28) from Mus musculus (Mouse).